The following is a 1066-amino-acid chain: Bifunctional cytochrome P450/NADPH--P450 reductase (1066 aa).

The cytochrome P450 stretch occupies residues 1–480; sequence MAESVPIPEP…LAGNGATSSS (480 aa). Heme is bound at residue Cys-407. The segment at 481–1066 is NADPH-P-450 reductase; it reads THNIKAAANL…NERFATDVFD (586 aa). A Flavodoxin-like domain is found at 500-641; the sequence is MAIFYGSNSG…DFEAWEDIVL (142 aa). FMN contacts are provided by residues 506-511, 554-557, Cys-588, and Thr-596; these read SNSGTC and SYEG. The FAD-binding FR-type domain occupies 676 to 904; the sequence is QDVEEALVVA…RASSEAFHLP (229 aa).

In the N-terminal section; belongs to the cytochrome P450 family. It depends on FAD as a cofactor. FMN serves as cofactor. The cofactor is heme.

It is found in the membrane. It carries out the reaction an organic molecule + reduced [NADPH--hemoprotein reductase] + O2 = an alcohol + oxidized [NADPH--hemoprotein reductase] + H2O + H(+). It catalyses the reaction 2 oxidized [cytochrome P450] + NADPH = 2 reduced [cytochrome P450] + NADP(+) + H(+). Its activity is regulated as follows. Stimulated NADPH--cytochrome reductase activity in the presence of substrate. Inhibited by fatty acid substrates longer than 13 carbons and the degree of inhibition increases with increasing chain length. In terms of biological role, functions as a fatty acid monooxygenase. Catalyzes hydroxylation of fatty acids at omega-1, omega-2 and omega-3 positions. Shows activity toward fatty acids with a chain length of 9-18 carbons with optimum chain lengths of 12-14 carbons (lauric, tridecylic and myristic acids). Can also use shorter saturated fatty acids with a chain length of 9 or 10 carbons as substrates. Also displays a NADPH-dependent reductase activity in the C-terminal domain, which allows electron transfer from NADPH to the heme iron of the cytochrome P450 N-terminal domain. In Fusarium oxysporum (Fusarium vascular wilt), this protein is Bifunctional cytochrome P450/NADPH--P450 reductase.